Here is a 107-residue protein sequence, read N- to C-terminus: Small ribosomal subunit protein eS25 (107 aa).

A disordered region spans residues 1 to 35; that stretch reads MPPKQQLSKAAKAAAAMAGGKKSKKKWSKKSHKDK. Residues 8 to 20 are compositionally biased toward low complexity; it reads SKAAKAAAAMAGG. The span at 21–35 shows a compositional bias: basic residues; it reads KKSKKKWSKKSHKDK.

This sequence belongs to the eukaryotic ribosomal protein eS25 family.

The protein is Small ribosomal subunit protein eS25 (RPS25) of Candida glabrata (strain ATCC 2001 / BCRC 20586 / JCM 3761 / NBRC 0622 / NRRL Y-65 / CBS 138) (Yeast).